Reading from the N-terminus, the 707-residue chain is Polyribonucleotide nucleotidyltransferase (707 aa).

Mg(2+)-binding residues include aspartate 488 and aspartate 494. Positions 555–614 (PRLYVMKINPEKIRDVIGKGGAVIRALTEETGTQINIEEDGTITIASNDSAKADEAKRRI) constitute a KH domain. Residues 624–692 (GKVYEGAITK…EKGRVKLSMK (69 aa)) form the S1 motif domain.

It belongs to the polyribonucleotide nucleotidyltransferase family. Requires Mg(2+) as cofactor.

The protein localises to the cytoplasm. It carries out the reaction RNA(n+1) + phosphate = RNA(n) + a ribonucleoside 5'-diphosphate. In terms of biological role, involved in mRNA degradation. Catalyzes the phosphorolysis of single-stranded polyribonucleotides processively in the 3'- to 5'-direction. The chain is Polyribonucleotide nucleotidyltransferase from Polaromonas sp. (strain JS666 / ATCC BAA-500).